Reading from the N-terminus, the 304-residue chain is Quinolinate synthase (304 aa).

Histidine 24 and serine 41 together coordinate iminosuccinate. Cysteine 86 lines the [4Fe-4S] cluster pocket. Residues 112–114 (YVN) and serine 129 each bind iminosuccinate. Cysteine 171 lines the [4Fe-4S] cluster pocket. Residues 197 to 199 (HPE) and threonine 214 each bind iminosuccinate. Residue cysteine 259 participates in [4Fe-4S] cluster binding.

Belongs to the quinolinate synthase family. Type 2 subfamily. [4Fe-4S] cluster is required as a cofactor.

The protein resides in the cytoplasm. The catalysed reaction is iminosuccinate + dihydroxyacetone phosphate = quinolinate + phosphate + 2 H2O + H(+). It functions in the pathway cofactor biosynthesis; NAD(+) biosynthesis; quinolinate from iminoaspartate: step 1/1. Its function is as follows. Catalyzes the condensation of iminoaspartate with dihydroxyacetone phosphate to form quinolinate. This Geobacter metallireducens (strain ATCC 53774 / DSM 7210 / GS-15) protein is Quinolinate synthase.